Consider the following 96-residue polypeptide: Integration host factor subunit beta (96 aa).

This sequence belongs to the bacterial histone-like protein family. As to quaternary structure, heterodimer of an alpha and a beta chain.

This protein is one of the two subunits of integration host factor, a specific DNA-binding protein that functions in genetic recombination as well as in transcriptional and translational control. The protein is Integration host factor subunit beta of Photobacterium profundum (strain SS9).